The primary structure comprises 209 residues: Thymidylate kinase (209 aa).

10–17 (GPDGAGKT) provides a ligand contact to ATP.

It belongs to the thymidylate kinase family.

The catalysed reaction is dTMP + ATP = dTDP + ADP. Functionally, phosphorylation of dTMP to form dTDP in both de novo and salvage pathways of dTTP synthesis. This chain is Thymidylate kinase, found in Pediococcus pentosaceus (strain ATCC 25745 / CCUG 21536 / LMG 10740 / 183-1w).